Consider the following 268-residue polypeptide: MSIDLEWCKLDSSLATYLVEVLNRQLGNAERPSFIGPVEVTSLDFGSASPDVELVDLRDIYRDFLEDDEEGSDRGPVKVTEGAEDEEGFEWVGEYDRGASIPATNVTSSLDTRSDQPDDQKAPLLPPPPAENPHPNLQLHLHVNWHSNLRITLTTSLLINYPSPMFMSLPIKLSVTGLIFIGELAVAYEGERRRVHLCILDDLDPYGPAGDRQRLLPSIYIESEIGQADKHVLKNVTRVERFIQDVIRKTVEEELVFPNFHTIVMADS.

The 266-residue stretch at M1 to A266 folds into the SMP-LTD domain. Positions E66 to N136 are disordered. Residues P102–D111 are compositionally biased toward polar residues. Residues T112–K121 are compositionally biased toward basic and acidic residues.

This sequence belongs to the MDM12 family. As to quaternary structure, component of the ER-mitochondria encounter structure (ERMES) or MDM complex, composed of MMM1, MDM10, MDM12 and MDM34. An MMM1 homodimer associates with one molecule of MDM12 on each side in a pairwise head-to-tail manner, and the SMP-LTD domains of MMM1 and MDM12 generate a continuous hydrophobic tunnel for phospholipid trafficking.

The protein resides in the mitochondrion outer membrane. It is found in the endoplasmic reticulum membrane. Component of the ERMES/MDM complex, which serves as a molecular tether to connect the endoplasmic reticulum (ER) and mitochondria. Components of this complex are involved in the control of mitochondrial shape and protein biogenesis, and function in nonvesicular lipid trafficking between the ER and mitochondria. MDM12 is required for the interaction of the ER-resident membrane protein MMM1 and the outer mitochondrial membrane-resident beta-barrel protein MDM10. The MDM12-MMM1 subcomplex functions in the major beta-barrel assembly pathway that is responsible for biogenesis of all mitochondrial outer membrane beta-barrel proteins, and acts in a late step after the SAM complex. The MDM10-MDM12-MMM1 subcomplex further acts in the TOM40-specific pathway after the action of the MDM12-MMM1 complex. Essential for establishing and maintaining the structure of mitochondria and maintenance of mtDNA nucleoids. In Laccaria bicolor (strain S238N-H82 / ATCC MYA-4686) (Bicoloured deceiver), this protein is Mitochondrial distribution and morphology protein 12.